The chain runs to 478 residues: ATP synthase subunit beta (478 aa).

ATP is bound at residue 151 to 158 (GGAGVGKT).

Belongs to the ATPase alpha/beta chains family. F-type ATPases have 2 components, CF(1) - the catalytic core - and CF(0) - the membrane proton channel. CF(1) has five subunits: alpha(3), beta(3), gamma(1), delta(1), epsilon(1). CF(0) has three main subunits: a(1), b(2) and c(9-12). The alpha and beta chains form an alternating ring which encloses part of the gamma chain. CF(1) is attached to CF(0) by a central stalk formed by the gamma and epsilon chains, while a peripheral stalk is formed by the delta and b chains.

It is found in the cell inner membrane. The enzyme catalyses ATP + H2O + 4 H(+)(in) = ADP + phosphate + 5 H(+)(out). Functionally, produces ATP from ADP in the presence of a proton gradient across the membrane. The catalytic sites are hosted primarily by the beta subunits. This chain is ATP synthase subunit beta, found in Azorhizobium caulinodans (strain ATCC 43989 / DSM 5975 / JCM 20966 / LMG 6465 / NBRC 14845 / NCIMB 13405 / ORS 571).